The chain runs to 232 residues: Ras association domain-containing protein 3 (232 aa).

Ser2 carries the post-translational modification N-acetylserine. Residues 25 to 46 (RAPPGKSRSGQPDVEKEKETHN) are disordered. Basic and acidic residues predominate over residues 37–46 (DVEKEKETHN). In terms of domain architecture, Ras-associating spans 78 to 180 (YTGFIKVQME…TLSFVLREHE (103 aa)). The SARAH domain maps to 181–228 (IGEWEAFSLPELQNFLRILDKEEDEQLQSLKRRYTAYRQKLEEALGEV).

The protein resides in the cytoplasm. The protein localises to the cytoskeleton. In Mus musculus (Mouse), this protein is Ras association domain-containing protein 3 (Rassf3).